The primary structure comprises 167 residues: Endoribonuclease YbeY (167 aa).

The Zn(2+) site is built by His131, His135, and His141.

Belongs to the endoribonuclease YbeY family. It depends on Zn(2+) as a cofactor.

The protein localises to the cytoplasm. Single strand-specific metallo-endoribonuclease involved in late-stage 70S ribosome quality control and in maturation of the 3' terminus of the 16S rRNA. The protein is Endoribonuclease YbeY of Rickettsia conorii (strain ATCC VR-613 / Malish 7).